The chain runs to 404 residues: Glucoside xylosyltransferase 1 (404 aa).

Over Met-1–Arg-6 the chain is Cytoplasmic. Residues Val-7–Ser-29 traverse the membrane as a helical; Signal-anchor for type II membrane protein segment. At Leu-30–Arg-404 the chain is on the lumenal side. Asn-201 carries N-linked (GlcNAc...) asparagine glycosylation.

The protein belongs to the glycosyltransferase 8 family.

Its subcellular location is the membrane. The catalysed reaction is 3-O-(beta-D-glucosyl)-L-seryl-[EGF-like domain protein] + UDP-alpha-D-xylose = 3-O-[alpha-D-xylosyl-(1-&gt;3)-beta-D-glucosyl]-L-seryl-[EGF-like domain protein] + UDP + H(+). Functionally, glycosyltransferase which elongates the O-linked glucose attached to EGF-like repeats in the extracellular domain of Notch proteins by catalyzing the addition of xylose. This chain is Glucoside xylosyltransferase 1 (Gxylt1), found in Mus musculus (Mouse).